The sequence spans 222 residues: MFTKQVQESGVYKWFNDRLEIEAISDDISSKYVPPHVNIFYCLGGITLVCFIIQFATGFAMTFYYKPSVTEAFTSVQYLMNEVSFGWLIRSIHRWSASMMVLMMILHVFRVYLTGGFKNPRELTWITGVILAVITVSFGVTGYSLPWDQVGYWAVKIVSGVPEAIPLVGPLMVELIRGSASVGQATLTRFYSLHTFVLPWFIAVFMLMHFLMIRKQGISGPL.

A helical membrane pass occupies residues 39–59 (IFYCLGGITLVCFIIQFATGF). Cysteine 42 contacts heme c. The heme b site is built by histidine 93 and histidine 107. A run of 3 helical transmembrane segments spans residues 97-117 (ASMM…TGGF), 123-143 (LTWI…VTGY), and 193-213 (LHTF…FLMI). Heme b is bound by residues histidine 194 and histidine 209.

The protein belongs to the cytochrome b family. PetB subfamily. The 4 large subunits of the cytochrome b6-f complex are cytochrome b6, subunit IV (17 kDa polypeptide, PetD), cytochrome f and the Rieske protein, while the 4 small subunits are PetG, PetL, PetM and PetN. The complex functions as a dimer. Requires heme b as cofactor. It depends on heme c as a cofactor.

The protein resides in the cellular thylakoid membrane. Component of the cytochrome b6-f complex, which mediates electron transfer between photosystem II (PSII) and photosystem I (PSI), cyclic electron flow around PSI, and state transitions. The chain is Cytochrome b6 from Prochlorothrix hollandica.